The following is a 296-amino-acid chain: GTP-binding protein GEM (296 aa).

Disordered stretches follow at residues methionine 1–glutamine 20 and proline 37–serine 68. The span at serine 57–serine 68 shows a compositional bias: low complexity. GTP is bound by residues glycine 82 to serine 89 and asparagine 191 to aspartate 194. The calmodulin-binding stretch occupies residues alanine 266 to leucine 285.

The protein belongs to the small GTPase superfamily. RGK family. Interacts with calmodulin in a Ca(2+)-dependent manner. Binds ROCK1. Post-translationally, phosphorylated on tyrosine residues. In terms of tissue distribution, most abundant in thymus, spleen, kidney, lung, and testis. Less abundant in heart, brain, liver and skeletal muscle.

Its subcellular location is the cell membrane. In terms of biological role, could be a regulatory protein, possibly participating in receptor-mediated signal transduction at the plasma membrane. Has guanine nucleotide-binding activity but undetectable intrinsic GTPase activity. The polypeptide is GTP-binding protein GEM (GEM) (Homo sapiens (Human)).